The following is a 143-amino-acid chain: Transcriptional regulator MraZ (143 aa).

2 SpoVT-AbrB domains span residues 5-47 (THSP…PIRE) and 76-119 (ASNE…DAQT).

The protein belongs to the MraZ family. In terms of assembly, forms oligomers.

It is found in the cytoplasm. It localises to the nucleoid. The chain is Transcriptional regulator MraZ from Thermobifida fusca (strain YX).